Consider the following 168-residue polypeptide: 3-isopropylmalate dehydratase small subunit 2 (168 aa).

It belongs to the LeuD family. LeuD type 2 subfamily. As to quaternary structure, heterodimer of LeuC and LeuD.

The catalysed reaction is (2R,3S)-3-isopropylmalate = (2S)-2-isopropylmalate. It participates in amino-acid biosynthesis; L-leucine biosynthesis; L-leucine from 3-methyl-2-oxobutanoate: step 2/4. Catalyzes the isomerization between 2-isopropylmalate and 3-isopropylmalate, via the formation of 2-isopropylmaleate. The protein is 3-isopropylmalate dehydratase small subunit 2 (leuD2) of Methanopyrus kandleri (strain AV19 / DSM 6324 / JCM 9639 / NBRC 100938).